The sequence spans 467 residues: Calcium-binding protein P (467 aa).

2 stretches are compositionally biased toward pro residues: residues 1-10 (MQNPQNPPPA) and 45-62 (QYPPQQPGAPGSNLPPYP). The interval 1–311 (MQNPQNPPPA…GAYPGQPPMG (311 aa)) is disordered. The XYPPX motif lies at 45 to 49 (QYPPQ). The segment covering 63-74 (GTQQPGAPGAPG) has biased composition (low complexity). 17 short sequence motifs (XYPPX) span residues 75–79 (QYPPQ), 83–87 (QYPPQ), 94–98 (QYPPQ), 104–108 (GYPPQ), 115–119 (QYPPQ), 125–129 (GYPPQ), 136–140 (QYPPQ), 146–150 (QYPPQ), 157–161 (QYPPQ), 165–169 (QYPPQ), 176–180 (AYPPQ), 187–191 (AYPPQ), 221–225 (GVPPQ), 238–242 (AYPPQ), 247–251 (AYPPQ), 256–260 (AYPPQ), and 275–279 (AYPPQ). Pro residues-rich tracts occupy residues 75 to 109 (QYPPQQPGQYPPQQPGAPGQYPPQQPGQPGYPPQQ) and 118 to 131 (PQQPGQPGYPPQQP). Residues 132 to 145 (GAPGQYPPQQGQPG) show a composition bias toward low complexity. Low complexity-rich tracts occupy residues 153–193 (GQPG…PQQG) and 215–246 (AYPGQPGVPPQQGAYPGQQPPMGAYPPQGQPG). Low complexity predominate over residues 253 to 311 (QPGAYPPQQQQVAYPGQQPPMGAYPPQQGAYPGQQGAYPGQQGAYPGQQGAYPGQPPMG). EF-hand domains follow at residues 399–434 (QKMMAASAAFRIHDSNCSGTLSKKEFKKLIKHLGYY) and 435–467 (FSKGQTKMLFHSIDRDYSGSLSEREFVDWWSMQ). Residues aspartate 412, asparagine 414, serine 416, threonine 418, and glutamate 423 each coordinate Ca(2+).

This Dictyostelium discoideum (Social amoeba) protein is Calcium-binding protein P (cbpP).